A 169-amino-acid polypeptide reads, in one-letter code: Succinate dehydrogenase cytochrome b560 subunit, mitochondrial (169 aa).

Residues 1–29 (MAAFLLRHVSRHCLRAHLNAQLCIRNAAP) constitute a mitochondrion transit peptide. The Mitochondrial matrix portion of the chain corresponds to 30–62 (LGTTAKEEMERFWKKNTSSNRPLSPHLTIYKWS). The helical transmembrane segment at 63-92 (LPMALSVCHRGSGIALSGGVSLFGLSALLL) threads the bilayer. Over 93 to 112 (PGNFESYLMFVKSLCLGPTL) the chain is Mitochondrial intermembrane. The chain crosses the membrane as a helical span at residues 113–137 (IYSAKFVLVFPLMYHSLNGIRHLLW). Position 127 (His-127) interacts with heme b. Topologically, residues 138–144 (DLGKGLA) are mitochondrial matrix. Residues 145–166 (IPQVWLSGVAVVVLAVLSSGGL) traverse the membrane as a helical segment. Residues 167-169 (AAL) lie on the Mitochondrial intermembrane side of the membrane.

The protein belongs to the cytochrome b560 family. Component of complex II composed of four subunits: the flavoprotein (FP) SDHA, iron-sulfur protein (IP) SDHB, and a cytochrome b560 composed of SDHC and SDHD. The cofactor is heme b.

Its subcellular location is the mitochondrion inner membrane. It participates in carbohydrate metabolism; tricarboxylic acid cycle. Membrane-anchoring subunit of succinate dehydrogenase (SDH) that is involved in complex II of the mitochondrial electron transport chain and is responsible for transferring electrons from succinate to ubiquinone (coenzyme Q). SDH also oxidizes malate to the non-canonical enol form of oxaloacetate, enol-oxaloacetate. Enol-oxaloacetate, which is a potent inhibitor of the succinate dehydrogenase activity, is further isomerized into keto-oxaloacetate. The chain is Succinate dehydrogenase cytochrome b560 subunit, mitochondrial (Sdhc) from Mus musculus (Mouse).